The following is a 308-amino-acid chain: Ribosomal RNA large subunit methyltransferase F (308 aa).

It belongs to the methyltransferase superfamily. METTL16/RlmF family.

The protein localises to the cytoplasm. The catalysed reaction is adenosine(1618) in 23S rRNA + S-adenosyl-L-methionine = N(6)-methyladenosine(1618) in 23S rRNA + S-adenosyl-L-homocysteine + H(+). Specifically methylates the adenine in position 1618 of 23S rRNA. In Shigella boydii serotype 18 (strain CDC 3083-94 / BS512), this protein is Ribosomal RNA large subunit methyltransferase F.